Here is a 314-residue protein sequence, read N- to C-terminus: Ribosomal protein uL3 glutamine methyltransferase (314 aa).

Belongs to the protein N5-glutamine methyltransferase family. PrmB subfamily.

It carries out the reaction L-glutaminyl-[ribosomal protein uL3] + S-adenosyl-L-methionine = N(5)-methyl-L-glutaminyl-[ribosomal protein uL3] + S-adenosyl-L-homocysteine + H(+). In terms of biological role, methylates large ribosomal subunit protein uL3 on a specific glutamine residue. In Shewanella oneidensis (strain ATCC 700550 / JCM 31522 / CIP 106686 / LMG 19005 / NCIMB 14063 / MR-1), this protein is Ribosomal protein uL3 glutamine methyltransferase.